Reading from the N-terminus, the 265-residue chain is Type 1 encapsulin shell protein (265 aa).

It belongs to the encapsulin family. Family 1 subfamily. Multimeric. The encapsulin nanocompartment is formed by 60 subunits. Monomers form pentamers which assemble to form shells. There are 12 pores where the pentamers meet as well as 3-fold axis channels and dimer channels; none are larger than 3-4 Angstroms in diameter. The N-terminus of the protein is inside the shell, the C-terminus is outside. The initiator methionine is partially removed. When isolated from culture filtrate isoelectric focusing gives 3 bands, none of which are glycosylated.

The protein localises to the encapsulin nanocompartment. It localises to the secreted. The protein resides in the cell membrane. Shell component of a type 1 encapsulin nanocompartment in situ; its cargo protects against oxidative stress at low pH. In situ and in E.coli assembles into proteinaceous shells about 22 nm in diameter with 2.5 nm thick walls. Cargo proteins are targeted to the interior via their C-terminal extensions; empty intact shells can be isolated in E.coli in the absence of cargo protein. There are at least 4 possible cargo proteins, DyP (encoded in the same locus), FolB, BfrB and Rv1762c; DyP and Rv1762c have been identified in vivo. Probably involved in protection against oxidative damage from the host immune response. A T-cell antigen found in bacterial culture cell filtrates, stimulates mouse immune response. Does not have detectable bacteriocin activity. This Mycobacterium tuberculosis (strain ATCC 25618 / H37Rv) protein is Type 1 encapsulin shell protein.